The sequence spans 105 residues: Large ribosomal subunit protein eL30 (105 aa).

This sequence belongs to the eukaryotic ribosomal protein eL30 family.

This chain is Large ribosomal subunit protein eL30 (RPL30), found in Trypanosoma brucei brucei.